The chain runs to 102 residues: uncharacterized protein (102 aa).

The signal sequence occupies residues 1 to 41; that stretch reads MLFLDSYSLLIQFQRFKNWESPRRFSSSFPLLLFVFKPIFA.

This is an uncharacterized protein from Saccharomyces cerevisiae (strain ATCC 204508 / S288c) (Baker's yeast).